Reading from the N-terminus, the 89-residue chain is Small ribosomal subunit protein uS15 (89 aa).

Belongs to the universal ribosomal protein uS15 family. As to quaternary structure, part of the 30S ribosomal subunit. Forms a bridge to the 50S subunit in the 70S ribosome, contacting the 23S rRNA.

One of the primary rRNA binding proteins, it binds directly to 16S rRNA where it helps nucleate assembly of the platform of the 30S subunit by binding and bridging several RNA helices of the 16S rRNA. Functionally, forms an intersubunit bridge (bridge B4) with the 23S rRNA of the 50S subunit in the ribosome. The protein is Small ribosomal subunit protein uS15 of Zymomonas mobilis subsp. mobilis (strain ATCC 31821 / ZM4 / CP4).